Consider the following 274-residue polypeptide: 2,3,4,5-tetrahydropyridine-2,6-dicarboxylate N-succinyltransferase (274 aa).

The substrate site is built by arginine 106 and aspartate 143.

Belongs to the transferase hexapeptide repeat family. As to quaternary structure, homotrimer.

Its subcellular location is the cytoplasm. It carries out the reaction (S)-2,3,4,5-tetrahydrodipicolinate + succinyl-CoA + H2O = (S)-2-succinylamino-6-oxoheptanedioate + CoA. It participates in amino-acid biosynthesis; L-lysine biosynthesis via DAP pathway; LL-2,6-diaminopimelate from (S)-tetrahydrodipicolinate (succinylase route): step 1/3. In Rickettsia prowazekii (strain Madrid E), this protein is 2,3,4,5-tetrahydropyridine-2,6-dicarboxylate N-succinyltransferase.